The following is a 512-amino-acid chain: MTAPWVALALLWGSLCAGSGRGEAETRECIYYNANWELERTNQSGLERCEGEQDKRLHCYASWRNSSGTIELVKKGCWLDDFNCYDRQECVATEENPQVYFCCCEGNFCNERFTHLPEAGGPEVTYEPPPTAPTLLTVLAYSLLPIGGLSLIVLLAFWMYRHRKPPYGHVDIHEDPGPPPPSPLVGLKPLQLLEIKARGRFGCVWKAQLMNDFVAVKIFPLQDKQSWQSEREIFSTPGMKHENLLQFIAAEKRGSNLEVELWLITAFHDKGSLTDYLKGNIITWNELCHVAETMSRGLSYLHEDVPWCRGEGHKPSIAHRDFKSKNVLLKSDLTAVLADFGLAVRFEPGKPPGDTHGQVGTRRYMAPEVLEGAINFQRDAFLRIDMYAMGLVLWELVSRCKAADGPVDEYMLPFEEEIGQHPSLEELQEVVVHKKMRPTIKDHWLKHPGLAQLCVTIEECWDHDAEARLSAGCVEERVSLIRRSVNGTTSDCLVSLVTSVTNVDLPPKESSI.

A signal peptide spans 1-18 (MTAPWVALALLWGSLCAG). Topologically, residues 19–137 (SGRGEAETRE…PPPTAPTLLT (119 aa)) are extracellular. 5 cysteine pairs are disulfide-bonded: C29–C59, C49–C77, C84–C103, C90–C102, and C104–C109. N-linked (GlcNAc...) asparagine glycans are attached at residues N42 and N65. Residues 138-158 (VLAYSLLPIGGLSLIVLLAFW) traverse the membrane as a helical segment. The Cytoplasmic portion of the chain corresponds to 159–512 (MYRHRKPPYG…VDLPPKESSI (354 aa)). In terms of domain architecture, Protein kinase spans 190–480 (LQLLEIKARG…AGCVEERVSL (291 aa)). ATP-binding positions include 196–204 (KARGRFGCV) and K217. The Proton acceptor role is filled by D321. The interval 491–512 (DCLVSLVTSVTNVDLPPKESSI) is interaction with DYNLT1.

The protein belongs to the protein kinase superfamily. TKL Ser/Thr protein kinase family. TGFB receptor subfamily. As to quaternary structure, forms an activin receptor complex with activin type II receptors such as ACVR1B. Interacts with VPS39. Interacts with DYNLT1. Interacts with BMP3. Interacts with BMP2. Interacts with BMP6. It depends on Mg(2+) as a cofactor. Requires Mn(2+) as cofactor. Phosphorylated. Constitutive phosphorylation is in part catalyzed by its own kinase activity.

It localises to the cell membrane. It catalyses the reaction L-threonyl-[receptor-protein] + ATP = O-phospho-L-threonyl-[receptor-protein] + ADP + H(+). It carries out the reaction L-seryl-[receptor-protein] + ATP = O-phospho-L-seryl-[receptor-protein] + ADP + H(+). Functionally, transmembrane serine/threonine kinase activin type-2 receptor forming an activin receptor complex with activin type-1 serine/threonine kinase receptors (ACVR1, ACVR1B or ACVR1c). Transduces the activin signal from the cell surface to the cytoplasm and is thus regulating many physiological and pathological processes including neuronal differentiation and neuronal survival, hair follicle development and cycling, FSH production by the pituitary gland, wound healing, extracellular matrix production, immunosuppression and carcinogenesis. Activin is also thought to have a paracrine or autocrine role in follicular development in the ovary. Within the receptor complex, the type-2 receptors act as a primary activin receptors (binds activin-A/INHBA, activin-B/INHBB as well as inhibin-A/INHA-INHBA). The type-1 receptors like ACVR1B act as downstream transducers of activin signals. Activin binds to type-2 receptor at the plasma membrane and activates its serine-threonine kinase. The activated receptor type-2 then phosphorylates and activates the type-1 receptor. Once activated, the type-1 receptor binds and phosphorylates the SMAD proteins SMAD2 and SMAD3, on serine residues of the C-terminal tail. Soon after their association with the activin receptor and subsequent phosphorylation, SMAD2 and SMAD3 are released into the cytoplasm where they interact with the common partner SMAD4. This SMAD complex translocates into the nucleus where it mediates activin-induced transcription. Inhibitory SMAD7, which is recruited to ACVR1B through FKBP1A, can prevent the association of SMAD2 and SMAD3 with the activin receptor complex, thereby blocking the activin signal. Activin signal transduction is also antagonized by the binding to the receptor of inhibin-B via the IGSF1 inhibin coreceptor. The sequence is that of Activin receptor type-2B (ACVR2B) from Homo sapiens (Human).